The sequence spans 181 residues: Isopentenyl-diphosphate Delta-isomerase (181 aa).

Positions 25 and 32 each coordinate Mn(2+). One can recognise a Nudix hydrolase domain in the interval 30–164 (PLHLAFSCWL…PWAFSPWMVM (135 aa)). Cysteine 67 is a catalytic residue. Cysteine 67 is a binding site for Mg(2+). Histidine 69 serves as a coordination point for Mn(2+). Glutamate 87 provides a ligand contact to Mg(2+). Residues glutamate 114 and glutamate 116 each contribute to the Mn(2+) site. The active site involves glutamate 116.

Belongs to the IPP isomerase type 1 family. In terms of assembly, homodimer. Requires Mg(2+) as cofactor. It depends on Mn(2+) as a cofactor.

Its subcellular location is the cytoplasm. It carries out the reaction isopentenyl diphosphate = dimethylallyl diphosphate. Its pathway is isoprenoid biosynthesis; dimethylallyl diphosphate biosynthesis; dimethylallyl diphosphate from isopentenyl diphosphate: step 1/1. In terms of biological role, catalyzes the 1,3-allylic rearrangement of the homoallylic substrate isopentenyl (IPP) to its highly electrophilic allylic isomer, dimethylallyl diphosphate (DMAPP). The protein is Isopentenyl-diphosphate Delta-isomerase of Salmonella choleraesuis (strain SC-B67).